Reading from the N-terminus, the 332-residue chain is Glycerol-3-phosphate dehydrogenase [NAD(P)+] (332 aa).

Positions 15, 16, and 110 each coordinate NADPH. Sn-glycerol 3-phosphate contacts are provided by Lys110, Gly137, and Ser139. Position 141 (Ala141) interacts with NADPH. Sn-glycerol 3-phosphate-binding residues include Lys192, Asp245, Ser255, Arg256, and Asn257. Catalysis depends on Lys192, which acts as the Proton acceptor. Position 256 (Arg256) interacts with NADPH. Glu282 is a binding site for NADPH.

It belongs to the NAD-dependent glycerol-3-phosphate dehydrogenase family.

It is found in the cytoplasm. It carries out the reaction sn-glycerol 3-phosphate + NAD(+) = dihydroxyacetone phosphate + NADH + H(+). The enzyme catalyses sn-glycerol 3-phosphate + NADP(+) = dihydroxyacetone phosphate + NADPH + H(+). The protein operates within membrane lipid metabolism; glycerophospholipid metabolism. In terms of biological role, catalyzes the reduction of the glycolytic intermediate dihydroxyacetone phosphate (DHAP) to sn-glycerol 3-phosphate (G3P), the key precursor for phospholipid synthesis. In Coxiella burnetii (strain RSA 331 / Henzerling II), this protein is Glycerol-3-phosphate dehydrogenase [NAD(P)+].